The primary structure comprises 423 residues: UDP-N-acetylglucosamine 1-carboxyvinyltransferase 1 (423 aa).

23-24 (KN) provides a ligand contact to phosphoenolpyruvate. Position 96 (Arg-96) interacts with UDP-N-acetyl-alpha-D-glucosamine. Cys-120 functions as the Proton donor in the catalytic mechanism. Cys-120 carries the 2-(S-cysteinyl)pyruvic acid O-phosphothioketal modification. UDP-N-acetyl-alpha-D-glucosamine is bound by residues 125–129 (RPIDL), Asp-309, and Val-331.

The protein belongs to the EPSP synthase family. MurA subfamily.

It is found in the cytoplasm. The catalysed reaction is phosphoenolpyruvate + UDP-N-acetyl-alpha-D-glucosamine = UDP-N-acetyl-3-O-(1-carboxyvinyl)-alpha-D-glucosamine + phosphate. It functions in the pathway cell wall biogenesis; peptidoglycan biosynthesis. Functionally, cell wall formation. Adds enolpyruvyl to UDP-N-acetylglucosamine. This chain is UDP-N-acetylglucosamine 1-carboxyvinyltransferase 1, found in Streptococcus mutans serotype c (strain ATCC 700610 / UA159).